A 260-amino-acid chain; its full sequence is Small ribosomal subunit protein uS3 (260 aa).

Residues 39 to 114 (LRQYIEQKLG…QIRINVVEVQ (76 aa)) form the KH type-2 domain. The tract at residues 218-260 (QEVATPPPSPRDRDRDRGDRDREPRRRQQQRRRQQFEDRSNEG) is disordered. 2 stretches are compositionally biased toward basic and acidic residues: residues 227–243 (PRDRDRDRGDRDREPRR) and 251–260 (QQFEDRSNEG).

It belongs to the universal ribosomal protein uS3 family. As to quaternary structure, part of the 30S ribosomal subunit. Forms a tight complex with proteins S10 and S14.

Functionally, binds the lower part of the 30S subunit head. Binds mRNA in the 70S ribosome, positioning it for translation. The polypeptide is Small ribosomal subunit protein uS3 (Nostoc sp. (strain PCC 7120 / SAG 25.82 / UTEX 2576)).